The sequence spans 382 residues: Small ribosomal subunit protein bS1 homolog (382 aa).

S1 motif domains lie at 18–85 (GDVV…LSKR), 103–168 (GHVF…LSHK), 189–257 (GDVV…LSIK), and 274–343 (GDIR…LSIK). Residue Ser244 is modified to Phosphoserine.

Belongs to the bacterial ribosomal protein bS1 family.

This is Small ribosomal subunit protein bS1 homolog from Bacillus cereus (strain ATCC 10987 / NRS 248).